We begin with the raw amino-acid sequence, 605 residues long: Glucose oxidase (605 aa).

The first 16 residues, 1–16, serve as a signal peptide directing secretion; sequence MQTLLVSSLVVSLAAA. FAD contacts are provided by L51 and T52. A glycan (N-linked (GlcNAc...) asparagine) is linked at N65. An FAD-binding site is contributed by E72. A glycan (N-linked (GlcNAc...) asparagine) is linked at N111. The FAD site is built by S125, N129, G130, and T132. N183 and N190 each carry an N-linked (GlcNAc...) asparagine glycan. A disulfide bridge links C186 with C228. Position 272 (V272) interacts with FAD. N-linked (GlcNAc...) asparagine glycosylation is found at N280, N377, N410, and N495. H538 functions as the Proton acceptor in the catalytic mechanism. Residues R559 and V560 each contribute to the O2 site. 2 residues coordinate FAD: G571 and M583.

The protein belongs to the GMC oxidoreductase family. As to quaternary structure, homodimer. Requires FAD as cofactor. Post-translationally, the N-linked sugar chains of the glucose oxidase contributed to the high solubility of the enzyme in water.

It localises to the secreted. Its subcellular location is the cell wall. It is found in the cytoplasm. The protein resides in the extracellular space. The protein localises to the extracellular matrix. The enzyme catalyses beta-D-glucose + O2 = D-glucono-1,5-lactone + H2O2. Its function is as follows. Glucose oxidase catalyzes the oxidation of beta-D-glucose to D-glucono-delta-lactone and hydrogen peroxide in the presence of molecular oxygen. D-glucono-delta-lactone is sequentially hydrolyzed by lactonase to D-gluconic acid, and the resulting hydrogen peroxide is hydrolyzed by catalase to oxygen and water. The activity shows high specificity to beta-D-glucose, with very low to no activity towards L-glucose, 2-deoxy-D-glucose, 3-deoxy-D-glucose, 4-deoxy-D-glucose, 5-deoxy-D-glucose, 6-deoxy-D-glucose, 3-O-methyl-D-glucose, 4-O-methyl-D-glucose, 6-O-methyl-D-glucose, 4,6-O-benzylidene-D-glucose, 5-thio-5-deoxy-D-glucose, D-mannose, D-allose, D-galactose, D-fructose, D-arabinose, D-xylose, trehalose, melibiose, L-mannomethylose, lactose, sucrose or 1,5-anhydro-D-glucitol. The polypeptide is Glucose oxidase (Aspergillus niger).